The chain runs to 768 residues: Kelch domain-containing protein 7A (768 aa).

Residues 12-29 (VVLSAAALLLVTVAYRLY) traverse the membrane as a helical segment. Positions 35-210 (PAQRWGGNAQ…PAPLQGSSDM (176 aa)) are disordered. Phosphoserine is present on Ser-77. Over residues 104–118 (TDRKSQRKGSGEERG) the composition is skewed to basic and acidic residues. N-linked (GlcNAc...) asparagine glycosylation occurs at Asn-248. The interval 304-352 (LTEVPSPRPPPRSLGTGAASGGQAGDTKGAAERAASPQPGPSPSTRGFS) is disordered. One copy of the Kelch 1 repeat lies at 319–365 (TGAASGGQAGDTKGAAERAASPQPGPSPSTRGFSRKESLLQIAENPE). Ser-356 carries the post-translational modification Phosphoserine. Residues 371 to 395 (DGFWLPAPPCPDPGALPGSGRSSQE) are disordered. 4 Kelch repeats span residues 483–529 (QYLV…ICSL), 532–580 (YLFV…ALDG), 581–623 (HLYA…ATAC), and 626–668 (EIFV…AVNG).

It is found in the membrane. The sequence is that of Kelch domain-containing protein 7A (KLHDC7A) from Pongo abelii (Sumatran orangutan).